Consider the following 106-residue polypeptide: Large ribosomal subunit protein uL24 (106 aa).

It belongs to the universal ribosomal protein uL24 family. Part of the 50S ribosomal subunit.

One of two assembly initiator proteins, it binds directly to the 5'-end of the 23S rRNA, where it nucleates assembly of the 50S subunit. Its function is as follows. One of the proteins that surrounds the polypeptide exit tunnel on the outside of the subunit. The protein is Large ribosomal subunit protein uL24 of Paramagnetospirillum magneticum (strain ATCC 700264 / AMB-1) (Magnetospirillum magneticum).